The sequence spans 164 residues: Interferon gamma (164 aa).

An N-terminal signal peptide occupies residues 1-19 (MTCQTYNLFVLSVIMIYYG). Asn42 and Asn61 each carry an N-linked (GlcNAc...) asparagine glycan.

It belongs to the type II (or gamma) interferon family. In terms of assembly, homodimer.

The protein localises to the secreted. Produced by lymphocytes activated by specific antigens or mitogens. IFN-gamma, in addition to having antiviral activity, has important immunoregulatory functions. It is a potent activator of macrophages, it has antiproliferative effects on transformed cells and it can potentiate the antiviral and antitumor effects of the type I interferons. This Phasianus colchicus colchicus (Black-necked pheasant) protein is Interferon gamma (IFNG).